Consider the following 402-residue polypeptide: Glutamate N-acetyltransferase (402 aa).

Substrate is bound by residues Thr-146, Lys-172, Thr-185, Glu-267, Asn-397, and Thr-402. The active-site Nucleophile is the Thr-185.

Belongs to the ArgJ family. As to quaternary structure, heterotetramer of two alpha and two beta chains.

It is found in the cytoplasm. The enzyme catalyses N(2)-acetyl-L-ornithine + L-glutamate = N-acetyl-L-glutamate + L-ornithine. The protein operates within amino-acid biosynthesis; L-arginine biosynthesis; L-ornithine and N-acetyl-L-glutamate from L-glutamate and N(2)-acetyl-L-ornithine (cyclic): step 1/1. Its activity is regulated as follows. Competitively inhibited by L-ornithine. Its function is as follows. Catalyzes the transfer of the acetyl group from N(2)-acetylornithine to glutamate, forming N-acetylglutamate and L-ornithine. The chain is Glutamate N-acetyltransferase from Methanocaldococcus jannaschii (strain ATCC 43067 / DSM 2661 / JAL-1 / JCM 10045 / NBRC 100440) (Methanococcus jannaschii).